Consider the following 145-residue polypeptide: Putative pre-16S rRNA nuclease (145 aa).

The protein belongs to the YqgF nuclease family.

It localises to the cytoplasm. Could be a nuclease involved in processing of the 5'-end of pre-16S rRNA. This Limosilactobacillus fermentum (strain NBRC 3956 / LMG 18251) (Lactobacillus fermentum) protein is Putative pre-16S rRNA nuclease.